The sequence spans 350 residues: Probable peptidyl-alpha-hydroxyglycine alpha-amidating lyase pgal-1 (350 aa).

An N-terminal signal peptide occupies residues 1–19; the sequence is MRASTACLVALLAPFYISA. The NHL 1 repeat unit spans residues 46–90; it reads DRELIGLFNPSKEIGQVSGLAVNKNGHIVAFHRSGRVWDEKSFND. Residue Asn-103 is glycosylated (N-linked (GlcNAc...) asparagine). NHL repeat units lie at residues 113–154, 162–206, and 212–256; these read KKVI…IDAK, LGEK…FDAK, and QINA…FSAG. 2 cysteine pairs are disulfide-bonded: Cys-176/Cys-196 and Cys-241/Cys-252.

It belongs to the peptidyl-alpha-hydroxyglycine alpha-amidating lyase family. Zn(2+) is required as a cofactor.

Its subcellular location is the secreted. The enzyme catalyses a [peptide]-C-terminal (2S)-2-hydroxyglycine = a [peptide]-C-terminal amide + glyoxylate. In terms of biological role, probable lyase that catalyzes an essential reaction in C-terminal alpha-amidation of peptides. Mediates the dismutation of the unstable peptidyl(2-hydroxyglycine) intermediate to glyoxylate and the corresponding desglycine peptide amide. C-terminal amidation of peptides such as neuropeptides is essential for full biological activity. In Caenorhabditis elegans, this protein is Probable peptidyl-alpha-hydroxyglycine alpha-amidating lyase pgal-1.